The chain runs to 159 residues: 2-C-methyl-D-erythritol 2,4-cyclodiphosphate synthase (159 aa).

The a divalent metal cation site is built by Asp-9 and His-11. 4-CDP-2-C-methyl-D-erythritol 2-phosphate contacts are provided by residues 9–11 and 35–36; these read DVH and HS. An a divalent metal cation-binding site is contributed by His-43. Residues 57 to 59, 62 to 66, 133 to 136, Phe-140, and Arg-143 each bind 4-CDP-2-C-methyl-D-erythritol 2-phosphate; these read DLG, FPDTD, and TTTE.

This sequence belongs to the IspF family. In terms of assembly, homotrimer. A divalent metal cation is required as a cofactor.

The enzyme catalyses 4-CDP-2-C-methyl-D-erythritol 2-phosphate = 2-C-methyl-D-erythritol 2,4-cyclic diphosphate + CMP. The protein operates within isoprenoid biosynthesis; isopentenyl diphosphate biosynthesis via DXP pathway; isopentenyl diphosphate from 1-deoxy-D-xylulose 5-phosphate: step 4/6. In terms of biological role, involved in the biosynthesis of isopentenyl diphosphate (IPP) and dimethylallyl diphosphate (DMAPP), two major building blocks of isoprenoid compounds. Catalyzes the conversion of 4-diphosphocytidyl-2-C-methyl-D-erythritol 2-phosphate (CDP-ME2P) to 2-C-methyl-D-erythritol 2,4-cyclodiphosphate (ME-CPP) with a corresponding release of cytidine 5-monophosphate (CMP). The sequence is that of 2-C-methyl-D-erythritol 2,4-cyclodiphosphate synthase from Shouchella clausii (strain KSM-K16) (Alkalihalobacillus clausii).